A 502-amino-acid polypeptide reads, in one-letter code: ATP synthase subunit alpha, chloroplastic (502 aa).

170–177 contacts ATP; sequence GDRQTGKS.

The protein belongs to the ATPase alpha/beta chains family. F-type ATPases have 2 components, CF(1) - the catalytic core - and CF(0) - the membrane proton channel. CF(1) has five subunits: alpha(3), beta(3), gamma(1), delta(1), epsilon(1). CF(0) has four main subunits: a, b, b' and c.

The protein resides in the plastid. Its subcellular location is the chloroplast thylakoid membrane. It carries out the reaction ATP + H2O + 4 H(+)(in) = ADP + phosphate + 5 H(+)(out). Functionally, produces ATP from ADP in the presence of a proton gradient across the membrane. The alpha chain is a regulatory subunit. This Guillardia theta (Cryptophyte) protein is ATP synthase subunit alpha, chloroplastic.